A 426-amino-acid polypeptide reads, in one-letter code: Phosphomethylpyrimidine synthase (426 aa).

Substrate contacts are provided by residues N66, M95, Y124, H163, 185 to 187, 226 to 229, and E265; these read SRG and DGLR. H269 is a Zn(2+) binding site. Position 292 (Y292) interacts with substrate. Zn(2+) is bound at residue H333. Residues C407, C410, and C414 each coordinate [4Fe-4S] cluster.

The protein belongs to the ThiC family. [4Fe-4S] cluster serves as cofactor.

The catalysed reaction is 5-amino-1-(5-phospho-beta-D-ribosyl)imidazole + S-adenosyl-L-methionine = 4-amino-2-methyl-5-(phosphooxymethyl)pyrimidine + CO + 5'-deoxyadenosine + formate + L-methionine + 3 H(+). The protein operates within cofactor biosynthesis; thiamine diphosphate biosynthesis. Functionally, catalyzes the synthesis of the hydroxymethylpyrimidine phosphate (HMP-P) moiety of thiamine from aminoimidazole ribotide (AIR) in a radical S-adenosyl-L-methionine (SAM)-dependent reaction. This Thermococcus gammatolerans (strain DSM 15229 / JCM 11827 / EJ3) protein is Phosphomethylpyrimidine synthase.